Here is a 316-residue protein sequence, read N- to C-terminus: MASTSRLDALPRVTCPNHPDAILVEDYRAGDMICPECGLVVGDRVIDVGSEWRTFSNDKATKDPSRVGDSQNPLLSDGDLSTMIGKGTGAASFDEFGNSKYQNRRTMSSSDRAMMNAFKEITTMADRINLPRNIVDRTNNLFKQVYEQKSLKGRANDAIASACLYIACRQEGVPRTFKEICAVSRISKKEIGRCFKLILKALETSVDLITTGDFMSRFCSNLCLPKQVQMAATHIARKAVELDLVPGRSPISVAAAAIYMASQASAEKRTQKEIGDIAGVADVTIRQSYRLIYPRAPDLFPTDFKFDTPVDKLPQL.

The TFIIB-type zinc finger occupies 11-42; it reads PRVTCPNHPDAILVEDYRAGDMICPECGLVVG. Residues Cys-15, His-18, Cys-34, and Cys-37 each contribute to the Zn(2+) site. Phosphoserine is present on residues Ser-70, Ser-76, and Ser-92. 2 tandem repeats follow at residues 124-200 and 218-294. DNA-binding residues include Lys-152, Arg-154, Lys-189, and Lys-196. Residues 189–193 form a core promoter DNA-binding region; the sequence is KEIGR. Lys-238 carries the post-translational modification N6-acetyllysine; by autocatalysis. The segment at 244–316 is necessary for TATA box-bound complex TBP formation; sequence LVPGRSPISV…DTPVDKLPQL (73 aa). Residue Arg-248 coordinates DNA. A core promoter DNA-binding region spans residues 249-252; that stretch reads SPIS. Residues Lys-272, Ala-281, Thr-284, Arg-286, and Arg-290 each contribute to the DNA site. The tract at residues 283-286 is core promoter DNA-binding; that stretch reads VTIR.

It belongs to the TFIIB family. As to quaternary structure, found in a ternary complex with TATA box-bound TBP. Part of a TFIID-containing RNA polymerase II pre-initiation complex (PIC) that is composed of TBP and at least GTF2A1, GTF2A2, GTF2E1, GTF2E2, GTF2F1, GTF2H2, GTF2H3, GTF2H4, GTF2H5, GTF2B, TCEA1, ERCC2, ERCC3, TAF1, TAF2, TAF3, TAF4, TAF5, TAF6, TAF7, TAF8, TAF9, TAF10, TAF11, TAF12 and TAF13. Associates with TFIID-TFIIA (DA complex) to form TFIID-TFIIA-TFIIB (DAB complex), which is then recognized by RNA polymerase II (Pol II). Found in a RNA polymerase II initiation complex. Interacts (via C-terminus) with TBP; this interaction with TATA box-bound TBP guides Pol II into the PIC. Interacts (via N-terminus) with Pol II. Interacts (via C-terminus) with SSU72; this interaction is inhibited by SYMPK. Interacts with NR2F1; this interaction is direct. Interacts with PGR. Interacts with ESR1. Interacts with GTF2F1 (via C-terminus and preferentially via acetylated form); this interaction prevents binding of GTF2B to GTF2F2. Interacts with GTF2F2 (via N-terminus); this interaction is inhibited in presence of GTF2F1. Interacts with the transcription elongation factor TCEA2. Interacts with HSF1 (via transactivation domain). Interacts with GPBP1. Acetylated. Autoacetylated; autoacetylation at Lys-238 stimulates transcription activation.

It is found in the nucleus. It localises to the chromosome. It catalyses the reaction L-lysyl-[protein] + acetyl-CoA = N(6)-acetyl-L-lysyl-[protein] + CoA + H(+). Its function is as follows. General transcription factor that plays a role in transcription initiation by RNA polymerase II (Pol II). Involved in the pre-initiation complex (PIC) formation and Pol II recruitment at promoter DNA. Together with the TATA box-bound TBP forms the core initiation complex and provides a bridge between TBP and the Pol II-TFIIF complex. Released from the PIC early following the onset of transcription during the initiation and elongation transition and reassociates with TBP during the next transcription cycle. Associates with chromatin to core promoter-specific regions. Binds to two distinct DNA core promoter consensus sequence elements in a TBP-independent manner; these IIB-recognition elements (BREs) are localized immediately upstream (BREu), 5'-[GC][GC][GA]CGCC-3', and downstream (BREd), 5'-[GA]T[TGA][TG][GT][TG][TG]-3', of the TATA box element. Modulates transcription start site selection. Also exhibits autoacetyltransferase activity that contributes to the activated transcription. This is Transcription initiation factor IIB from Pongo abelii (Sumatran orangutan).